Consider the following 397-residue polypeptide: Exodeoxyribonuclease 7 large subunit (397 aa).

It belongs to the XseA family. Heterooligomer composed of large and small subunits.

The protein localises to the cytoplasm. The enzyme catalyses Exonucleolytic cleavage in either 5'- to 3'- or 3'- to 5'-direction to yield nucleoside 5'-phosphates.. Its function is as follows. Bidirectionally degrades single-stranded DNA into large acid-insoluble oligonucleotides, which are then degraded further into small acid-soluble oligonucleotides. The polypeptide is Exodeoxyribonuclease 7 large subunit (Anaplasma marginale (strain Florida)).